The sequence spans 93 residues: Cell division protein CrgA (93 aa).

Helical transmembrane passes span 31–51 (VWFV…LMVF) and 70–90 (LGPW…LLTM).

Belongs to the CrgA family.

It is found in the cell membrane. In terms of biological role, involved in cell division. This is Cell division protein CrgA from Mycobacterium avium (strain 104).